Reading from the N-terminus, the 542-residue chain is MELRSELPSVPGAATAAAATATGPPVASVASVAAAAAAAASLPVSVAGGLLRGPPLLLRAAEKYPRTPKCARCRNHGVVSALKGHKRYCRWKDCLCAKCTLIAERQRVMAAQVALRRQQAQEENEARELQLLYGTAEGLALAAANGIIPPRPAYEVFGSVCAADGGGPGAGAPAGTGGGAAGAGGSEAKLQKFDLFPKTLLQAGRPGSPLPPPVKPLSPDGADSGPGTSSPEVRPGSGSENGDGESFSGSPLARASKEAGGSCPGSAGPGGGGEEDSPGSASPLGSESGSEADKEEGEAAPAPGLGGGSGPRQRTPLDILTRVFPGHRRGVLELVLQGCGGDVVQAIEQVLNHHRGGLAAGLGPAAPPDKAAVGAAAAADDAWPSRVDAAAAAAAAAGGPGLPAPLQAGPAAPPHHRPLLAGAMAPGALGSLSSRSAFSPLQPNASHFGADAGAYPLGAPLGLSPLRLAYSAAAAHSRGLAFMAPYSTAGLVPTLGFRPPMDYAFSDLMRDRSAAAAAAVHKEPTYGGGLYGPMVNGAPEKQ.

A DNA-binding region (DM) is located at residues 70-117 (CARCRNHGVVSALKGHKRYCRWKDCLCAKCTLIAERQRVMAAQVALRR). Positions 201 to 316 (LQAGRPGSPL…GGSGPRQRTP (116 aa)) are disordered. One can recognise a DMA domain in the interval 314–349 (RTPLDILTRVFPGHRRGVLELVLQGCGGDVVQAIEQ).

Belongs to the DMRT family. Expressed in testis.

Its subcellular location is the nucleus. In terms of biological role, may be involved in sexual development. The protein is Doublesex- and mab-3-related transcription factor A2 (DMRTA2) of Homo sapiens (Human).